Here is a 204-residue protein sequence, read N- to C-terminus: uncharacterized protein (204 aa).

The active-site Tele-phosphohistidine intermediate is the His9. Glu86 (proton donor/acceptor) is an active-site residue.

It belongs to the phosphoglycerate mutase family.

This is an uncharacterized protein from Acanthamoeba polyphaga (Amoeba).